We begin with the raw amino-acid sequence, 207 residues long: ATP synthase subunit a (207 aa).

The next 6 helical transmembrane spans lie at 3 to 23, 62 to 82, 88 to 108, 119 to 139, 158 to 178, and 180 to 200; these read QHVI…TIFA, LIAS…IPGL, NLNT…FEGI, FLGP…LSHL, LISV…VMLI, and LIAV…YIAG.

This sequence belongs to the ATPase A chain family. As to quaternary structure, F-type ATPases have 2 components, CF(1) - the catalytic core - and CF(0) - the membrane proton channel. CF(1) has five subunits: alpha(3), beta(3), gamma(1), delta(1), epsilon(1). CF(0) has three main subunits: a(1), b(2) and c(9-12). The alpha and beta chains form an alternating ring which encloses part of the gamma chain. CF(1) is attached to CF(0) by a central stalk formed by the gamma and epsilon chains, while a peripheral stalk is formed by the delta and b chains.

It is found in the cell inner membrane. Functionally, key component of the proton channel; it plays a direct role in the translocation of protons across the membrane. This is ATP synthase subunit a from Sulfurihydrogenibium sp. (strain YO3AOP1).